A 1114-amino-acid polypeptide reads, in one-letter code: Kinesin-like protein KIN-12B (1114 aa).

Residues 1–119 (MRSLFSSKLS…GGGGGDSGVQ (119 aa)) are disordered. A compositionally biased stretch (low complexity) spans 98–107 (SAASPAPEGA). Residues 117-459 (GVQVVVRVRP…LRFAHRAKDI (343 aa)) enclose the Kinesin motor domain. 197 to 204 (GQTGSGKT) is an ATP binding site. Coiled-coil stretches lie at residues 772–810 (VLSA…KNQL) and 999–1043 (ELLV…DQEV). Positions 1055–1065 (LPSNVVQSPEP) are enriched in polar residues. The interval 1055–1081 (LPSNVVQSPEPSETGPARYDTGGSFGD) is disordered.

It belongs to the TRAFAC class myosin-kinesin ATPase superfamily. Kinesin family. KIN-12 subfamily.

In Oryza sativa subsp. japonica (Rice), this protein is Kinesin-like protein KIN-12B.